The chain runs to 258 residues: Elongation factor Ts (258 aa).

Positions 81 to 84 are involved in Mg(2+) ion dislocation from EF-Tu; sequence TDFV. The disordered stretch occupies residues 216-258; sequence GLKPAEAPKVEETPPAPPEEPAPEPAPAAESKPAKKGSAKKKK. Residues 229 to 241 show a composition bias toward pro residues; it reads PPAPPEEPAPEPA. The segment covering 249–258 has biased composition (basic residues); the sequence is AKKGSAKKKK.

It belongs to the EF-Ts family.

The protein resides in the cytoplasm. Functionally, associates with the EF-Tu.GDP complex and induces the exchange of GDP to GTP. It remains bound to the aminoacyl-tRNA.EF-Tu.GTP complex up to the GTP hydrolysis stage on the ribosome. The protein is Elongation factor Ts of Synechococcus sp. (strain JA-2-3B'a(2-13)) (Cyanobacteria bacterium Yellowstone B-Prime).